The chain runs to 157 residues: Transcriptional repressor NrdR (157 aa).

A zinc finger lies at 3–34 (CPSCQNTDSRVLESRSADAGKCVRRRRECLNC). Residues 49 to 139 (VTVIKRSNAK…VYRQFNGIED (91 aa)) enclose the ATP-cone domain.

The protein belongs to the NrdR family. It depends on Zn(2+) as a cofactor.

In terms of biological role, negatively regulates transcription of bacterial ribonucleotide reductase nrd genes and operons by binding to NrdR-boxes. The polypeptide is Transcriptional repressor NrdR (Prochlorococcus marinus (strain SARG / CCMP1375 / SS120)).